The primary structure comprises 190 residues: Elongation factor P-like protein (190 aa).

The protein belongs to the elongation factor P family.

This Citrobacter koseri (strain ATCC BAA-895 / CDC 4225-83 / SGSC4696) protein is Elongation factor P-like protein.